Consider the following 327-residue polypeptide: GDP-mannose transporter (327 aa).

The Cytoplasmic segment spans residues 1–4; it reads MESS. Residues 5-25 traverse the membrane as a helical segment; the sequence is LAAIANSGPISIFSYCVSSIL. The Lumenal portion of the chain corresponds to 26–36; that stretch reads MTVTNKYVLSG. Residues 37 to 57 form a helical membrane-spanning segment; sequence FSFNMNFLLLAVQSIVCIVTI. The Cytoplasmic segment spans residues 58–78; sequence GSLKSFGVITYRQFNKEEARK. Residues 79 to 93 traverse the membrane as a helical segment; that stretch reads WSPIAVLLVIMIYTS. Residues 94–102 lie on the Lumenal side of the membrane; the sequence is SKALQYLSI. The helical transmembrane segment at 103 to 125 threads the bilayer; that stretch reads PVYTIFKNLTIILIAYGEVLWFG. At 126–131 the chain is on the cytoplasmic side; sequence GKVTTM. The chain crosses the membrane as a helical span at residues 132 to 149; sequence ALSSFLLMVFSSVVAWYG. The Lumenal portion of the chain corresponds to 150-163; it reads DEAVSGSGNESFIA. Asn158 carries an N-linked (GlcNAc...) asparagine glycan. The chain crosses the membrane as a helical span at residues 164–184; that stretch reads LYLGYFWMATNCFASAAFVLI. The Cytoplasmic portion of the chain corresponds to 185–207; the sequence is MRKRIKLTNFKDFDTMYYNNLLS. Residues 208–228 form a helical membrane-spanning segment; the sequence is IPILLASSIIFEDWSAENLAV. The Lumenal segment spans residues 229-238; that stretch reads NFPSDNRTAT. The N-linked (GlcNAc...) asparagine glycan is linked to Asn234. The chain crosses the membrane as a helical span at residues 239-259; sequence IAAMVLSGASSVGISYCSAWC. At 260 to 266 the chain is on the cytoplasmic side; sequence VRVTSST. Residues 267 to 289 form a helical membrane-spanning segment; that stretch reads TYSMVGALNKLPIALSGLVFFPA. The Lumenal portion of the chain corresponds to 290–292; the sequence is AVN. Residues 293 to 312 form a helical membrane-spanning segment; it reads FWSVASIFVGFAAGLVYAVA. Residues 313–327 are Cytoplasmic-facing; sequence KQRQQKENVSLPSSK.

This sequence belongs to the TPT transporter family. SLC35D subfamily. In terms of assembly, homooligomer.

The protein localises to the golgi apparatus membrane. The protein resides in the cytoplasmic vesicle membrane. It localises to the endoplasmic reticulum membrane. Functionally, involved in the import of GDP-mannose from the cytoplasm into the Golgi lumen. This chain is GDP-mannose transporter (VRG4), found in Scheffersomyces stipitis (strain ATCC 58785 / CBS 6054 / NBRC 10063 / NRRL Y-11545) (Yeast).